Reading from the N-terminus, the 296-residue chain is Protoheme IX farnesyltransferase 1 (296 aa).

The next 8 membrane-spanning stretches (helical) occupy residues 14–34, 41–61, 86–106, 108–128, 141–161, 165–185, 230–250, and 274–294; these read IVLL…ALSA, LWDY…SSAL, IGEN…VVYA, FLLN…YVII, IVIG…AATG, LLGF…FWCL, AFGM…LMLV, and YLTI…PFPF.

Belongs to the UbiA prenyltransferase family. Protoheme IX farnesyltransferase subfamily.

The protein resides in the cell membrane. It catalyses the reaction heme b + (2E,6E)-farnesyl diphosphate + H2O = Fe(II)-heme o + diphosphate. Its pathway is porphyrin-containing compound metabolism; heme O biosynthesis; heme O from protoheme: step 1/1. In terms of biological role, converts heme B (protoheme IX) to heme O by substitution of the vinyl group on carbon 2 of heme B porphyrin ring with a hydroxyethyl farnesyl side group. The polypeptide is Protoheme IX farnesyltransferase 1 (Cenarchaeum symbiosum (strain A)).